Consider the following 307-residue polypeptide: Elongation factor Ts (307 aa).

Positions 80–83 are involved in Mg(2+) ion dislocation from EF-Tu; that stretch reads TDFV.

The protein belongs to the EF-Ts family.

Its subcellular location is the cytoplasm. Functionally, associates with the EF-Tu.GDP complex and induces the exchange of GDP to GTP. It remains bound to the aminoacyl-tRNA.EF-Tu.GTP complex up to the GTP hydrolysis stage on the ribosome. This chain is Elongation factor Ts, found in Azorhizobium caulinodans (strain ATCC 43989 / DSM 5975 / JCM 20966 / LMG 6465 / NBRC 14845 / NCIMB 13405 / ORS 571).